The primary structure comprises 212 residues: 3-demethoxyubiquinol 3-hydroxylase (212 aa).

Fe cation contacts are provided by Glu-61, Glu-91, His-94, Glu-143, Glu-175, and His-178.

This sequence belongs to the COQ7 family. Requires Fe cation as cofactor.

Its subcellular location is the cell membrane. It carries out the reaction a 5-methoxy-2-methyl-3-(all-trans-polyprenyl)benzene-1,4-diol + AH2 + O2 = a 3-demethylubiquinol + A + H2O. The protein operates within cofactor biosynthesis; ubiquinone biosynthesis. Catalyzes the hydroxylation of 2-nonaprenyl-3-methyl-6-methoxy-1,4-benzoquinol during ubiquinone biosynthesis. This is 3-demethoxyubiquinol 3-hydroxylase from Paraburkholderia phytofirmans (strain DSM 17436 / LMG 22146 / PsJN) (Burkholderia phytofirmans).